We begin with the raw amino-acid sequence, 387 residues long: Putative 8-amino-7-oxononanoate synthase (387 aa).

R19 serves as a coordination point for substrate. 107 to 108 provides a ligand contact to pyridoxal 5'-phosphate; that stretch reads GY. H132 lines the substrate pocket. Pyridoxal 5'-phosphate contacts are provided by residues S180, 206 to 209, and 237 to 240; these read DEAH and TFGK. K240 bears the N6-(pyridoxal phosphate)lysine mark. T354 is a binding site for substrate.

Belongs to the class-II pyridoxal-phosphate-dependent aminotransferase family. BioF subfamily. In terms of assembly, homodimer. It depends on pyridoxal 5'-phosphate as a cofactor.

The enzyme catalyses 6-carboxyhexanoyl-[ACP] + L-alanine + H(+) = (8S)-8-amino-7-oxononanoate + holo-[ACP] + CO2. The protein operates within cofactor biosynthesis; biotin biosynthesis. Catalyzes the decarboxylative condensation of pimeloyl-[acyl-carrier protein] and L-alanine to produce 8-amino-7-oxononanoate (AON), [acyl-carrier protein], and carbon dioxide. The sequence is that of Putative 8-amino-7-oxononanoate synthase (bioF) from Pasteurella multocida (strain Pm70).